The primary structure comprises 448 residues: Probable glycine dehydrogenase (decarboxylating) subunit 1 (448 aa).

The protein belongs to the GcvP family. N-terminal subunit subfamily. The glycine cleavage system is composed of four proteins: P, T, L and H. In this organism, the P 'protein' is a heterodimer of two subunits.

It catalyses the reaction N(6)-[(R)-lipoyl]-L-lysyl-[glycine-cleavage complex H protein] + glycine + H(+) = N(6)-[(R)-S(8)-aminomethyldihydrolipoyl]-L-lysyl-[glycine-cleavage complex H protein] + CO2. In terms of biological role, the glycine cleavage system catalyzes the degradation of glycine. The P protein binds the alpha-amino group of glycine through its pyridoxal phosphate cofactor; CO(2) is released and the remaining methylamine moiety is then transferred to the lipoamide cofactor of the H protein. The sequence is that of Probable glycine dehydrogenase (decarboxylating) subunit 1 from Staphylococcus aureus (strain USA300).